A 371-amino-acid polypeptide reads, in one-letter code: uncharacterized protein (371 aa).

The region spanning 43 to 148 (DESRVPKFYL…VQAFPTASNP (106 aa)) is the EH domain. Positions 179 to 205 (SMRKKKESDSKEVSAHNSPAKGAAHDL) are disordered.

This is an uncharacterized protein from Caenorhabditis elegans.